Consider the following 343-residue polypeptide: Anthranilate phosphoribosyltransferase (343 aa).

5-phospho-alpha-D-ribose 1-diphosphate contacts are provided by residues glycine 84, 87-88 (GD), threonine 92, 94-97 (NIST), 112-120 (KHGNRGVSS), and serine 124. Position 84 (glycine 84) interacts with anthranilate. Serine 96 serves as a coordination point for Mg(2+). Asparagine 115 contacts anthranilate. An anthranilate-binding site is contributed by arginine 170. Mg(2+) is bound by residues aspartate 229 and glutamate 230.

The protein belongs to the anthranilate phosphoribosyltransferase family. In terms of assembly, homodimer. The cofactor is Mg(2+).

The catalysed reaction is N-(5-phospho-beta-D-ribosyl)anthranilate + diphosphate = 5-phospho-alpha-D-ribose 1-diphosphate + anthranilate. The protein operates within amino-acid biosynthesis; L-tryptophan biosynthesis; L-tryptophan from chorismate: step 2/5. Catalyzes the transfer of the phosphoribosyl group of 5-phosphorylribose-1-pyrophosphate (PRPP) to anthranilate to yield N-(5'-phosphoribosyl)-anthranilate (PRA). The polypeptide is Anthranilate phosphoribosyltransferase (Burkholderia orbicola (strain AU 1054)).